We begin with the raw amino-acid sequence, 577 residues long: 2-succinyl-5-enolpyruvyl-6-hydroxy-3-cyclohexene-1-carboxylate synthase (577 aa).

It belongs to the TPP enzyme family. MenD subfamily. In terms of assembly, homodimer. Mg(2+) serves as cofactor. Requires Mn(2+) as cofactor. The cofactor is thiamine diphosphate.

The enzyme catalyses isochorismate + 2-oxoglutarate + H(+) = 5-enolpyruvoyl-6-hydroxy-2-succinyl-cyclohex-3-ene-1-carboxylate + CO2. Its pathway is quinol/quinone metabolism; 1,4-dihydroxy-2-naphthoate biosynthesis; 1,4-dihydroxy-2-naphthoate from chorismate: step 2/7. It functions in the pathway cofactor biosynthesis; phylloquinone biosynthesis. Its function is as follows. Catalyzes the thiamine diphosphate-dependent decarboxylation of 2-oxoglutarate and the subsequent addition of the resulting succinic semialdehyde-thiamine pyrophosphate anion to isochorismate to yield 2-succinyl-5-enolpyruvyl-6-hydroxy-3-cyclohexene-1-carboxylate (SEPHCHC). The sequence is that of 2-succinyl-5-enolpyruvyl-6-hydroxy-3-cyclohexene-1-carboxylate synthase from Synechococcus sp. (strain CC9311).